The primary structure comprises 337 residues: Phospholipase A1 1 (337 aa).

Residues 1–21 (MNFKYSILFICFVKVLDNCYA) form the signal peptide. The propeptide occupies 22–35 (ADDLTTLRNGTLDR). Residues Cys-41 and Cys-124 are joined by a disulfide bond. Ser-174 functions as the Nucleophile in the catalytic mechanism. Asp-202 functions as the Charge relay system in the catalytic mechanism. Disulfide bonds link Cys-213–Cys-218 and Cys-256–Cys-261. Catalysis depends on His-263, which acts as the Charge relay system. 3 disulfide bridges follow: Cys-278–Cys-305, Cys-279–Cys-330, and Cys-298–Cys-303.

Belongs to the AB hydrolase superfamily. Lipase family. In terms of tissue distribution, expressed by the venom gland.

The protein resides in the secreted. It carries out the reaction a 1,2-diacyl-sn-glycero-3-phosphocholine + H2O = a 2-acyl-sn-glycero-3-phosphocholine + a fatty acid + H(+). In terms of biological role, catalyzes the hydrolysis of phosphatidylcholine with phospholipase A1 activity. May act as an allergen and induce hemolytic activity. The protein is Phospholipase A1 1 of Polistes dominula (European paper wasp).